The sequence spans 218 residues: Small ribosomal subunit protein uS5 (218 aa).

In terms of domain architecture, S5 DRBM spans 66–129; that stretch reads LKQELLNVNL…REAKLNLVPV (64 aa).

Belongs to the universal ribosomal protein uS5 family. As to quaternary structure, part of the 30S ribosomal subunit. Contacts protein S4.

Its function is as follows. With S4 and S12 plays an important role in translational accuracy. This Pyrobaculum aerophilum (strain ATCC 51768 / DSM 7523 / JCM 9630 / CIP 104966 / NBRC 100827 / IM2) protein is Small ribosomal subunit protein uS5.